Here is a 103-residue protein sequence, read N- to C-terminus: Protein FMC1 homolog (103 aa).

This sequence belongs to the FMC1 family.

In Nematostella vectensis (Starlet sea anemone), this protein is Protein FMC1 homolog.